We begin with the raw amino-acid sequence, 645 residues long: Cilia- and flagella-associated protein 221 homolog (645 aa).

The interval 381-408 (GGAVHQPSAPVGSSSSGGGGGSDPAFKP) is disordered. Residues 428-435 (THQRLQRR) form an interaction with calmodulin region.

This sequence belongs to the PCDP1 family. As to quaternary structure, interacts with calmodulin; calcium-dependent. Part of the PDCP1 complex composed of CFAP46, CFAP54, CFAP74 and CFAP221; the PDCP1 complex binds calmodulin.

It is found in the cytoplasm. Its subcellular location is the cytoskeleton. The protein resides in the cilium axoneme. In terms of biological role, may play a role in cilium morphogenesis. In Chlamydomonas reinhardtii (Chlamydomonas smithii), this protein is Cilia- and flagella-associated protein 221 homolog.